The chain runs to 119 residues: Large ribosomal subunit protein bL20 (119 aa).

It belongs to the bacterial ribosomal protein bL20 family.

Its function is as follows. Binds directly to 23S ribosomal RNA and is necessary for the in vitro assembly process of the 50S ribosomal subunit. It is not involved in the protein synthesizing functions of that subunit. This chain is Large ribosomal subunit protein bL20, found in Thermoanaerobacter pseudethanolicus (strain ATCC 33223 / 39E) (Clostridium thermohydrosulfuricum).